The chain runs to 402 residues: mRNA-capping enzyme subunit alpha (402 aa).

The active-site N6-GMP-lysine intermediate is K66.

Belongs to the eukaryotic GTase family. As to quaternary structure, heterodimer. The mRNA-capping enzyme is composed of two separate chains alpha and beta, respectively a mRNA guanylyltransferase and an mRNA 5'-triphosphate monophosphatase.

The protein resides in the nucleus. It carries out the reaction a 5'-end diphospho-ribonucleoside in mRNA + GTP + H(+) = a 5'-end (5'-triphosphoguanosine)-ribonucleoside in mRNA + diphosphate. Its function is as follows. Second step of mRNA capping. Transfer of the GMP moiety of GTP to the 5'-end of RNA via an enzyme-GMP covalent reaction intermediate. The protein is mRNA-capping enzyme subunit alpha (rnp-2) of Neurospora crassa (strain ATCC 24698 / 74-OR23-1A / CBS 708.71 / DSM 1257 / FGSC 987).